We begin with the raw amino-acid sequence, 145 residues long: 3-dehydroquinate dehydratase (145 aa).

Y22 serves as the catalytic Proton acceptor. N71, H77, and D84 together coordinate substrate. H97 (proton donor) is an active-site residue. Residues 98 to 99 and R108 each bind substrate; that span reads IS.

The protein belongs to the type-II 3-dehydroquinase family. As to quaternary structure, homododecamer.

The enzyme catalyses 3-dehydroquinate = 3-dehydroshikimate + H2O. It participates in metabolic intermediate biosynthesis; chorismate biosynthesis; chorismate from D-erythrose 4-phosphate and phosphoenolpyruvate: step 3/7. Functionally, catalyzes a trans-dehydration via an enolate intermediate. The polypeptide is 3-dehydroquinate dehydratase (Thermotoga neapolitana (strain ATCC 49049 / DSM 4359 / NBRC 107923 / NS-E)).